The chain runs to 633 residues: Endosomal/prevacuolar sodium/hydrogen exchanger (633 aa).

Residues 1–21 (MLSKVLLNIAFKVLLTTAKRA) form the signal peptide. Residues 22–61 (VDPDDDDELLPSPDLPGSDDPIAGDPDVDLNPVTEEMFSS) are Lumenal-facing. Positions 25 to 44 (DDDDELLPSPDLPGSDDPIA) are disordered. Low complexity predominate over residues 31-42 (LPSPDLPGSDDP). A helical transmembrane segment spans residues 62–82 (WALFIMLLLLISALWSSYYLT). At 83–85 (QKR) the chain is on the cytoplasmic side. A helical transmembrane segment spans residues 86–106 (IRAVHETVLSIFYGMVIGLII). Over 107–117 (RMSPGHYIQDT) the chain is Lumenal. A helical transmembrane segment spans residues 118–138 (VTFNSSYFFNVLLPPIILNSG). An Amiloride-binding motif is present at residues 124-133 (YFFNVLLPPI). Over 139–152 (YELNQVNFFNNMLS) the chain is Cytoplasmic. The chain crosses the membrane as a helical span at residues 153-173 (ILIFAIPGTFISAVVIGIILY). Topologically, residues 174-189 (IWTFLGLESIDISFAD) are lumenal. Residues 190–211 (AMSVGATLSATDPVTILSIFNA) form a helical membrane-spanning segment. At 212–217 (YKVDPK) the chain is on the cytoplasmic side. Residues 218–238 (LYTIIFGESLLNDAISIVMFE) traverse the membrane as a helical segment. The Lumenal portion of the chain corresponds to 239–258 (TCQKFHGQPATFSSVFEGAG). Residues 259-279 (LFLMTFSVSLLIGVLIGILVA) form a helical membrane-spanning segment. Over 280 to 288 (LLLKHTHIR) the chain is Cytoplasmic. The chain crosses the membrane as a helical span at residues 289-308 (RYPQIESCLILLIAYESYFF). The Lumenal portion of the chain corresponds to 309–313 (SNGCH). The chain crosses the membrane as a helical span at residues 314-333 (MSGIVSLLFCGITLKHYAYY). At 334–344 (NMSRRSQITIK) the chain is on the cytoplasmic side. The chain crosses the membrane as a helical span at residues 345 to 364 (YIFQLLARLSENFIFIYLGL). Residues 365–376 (ELFTEVELVYKP) are Cytoplasmic-facing. A helical membrane pass occupies residues 377–397 (LLIIVAAISICVARWCAVFPL). Over 398 to 431 (SQFVNWIYRVKTIRSMSGITGENISVPDEIPYNY) the chain is Lumenal. Residue N420 is glycosylated (N-linked (GlcNAc...) asparagine). The chain crosses the membrane as a helical span at residues 432-452 (QMMTFWAGLRGAVGVALALGI). At 453 to 457 (QGEYK) the chain is on the cytoplasmic side. Residues 458–478 (FTLLATVLVVVVLTVIIFGGT) traverse the membrane as a helical segment. T490 carries the phosphothreonine modification. Residue S494 is modified to Phosphoserine. T498 is subject to Phosphothreonine. At S499 the chain carries Phosphoserine. N515, N550, and N563 each carry an N-linked (GlcNAc...) asparagine glycan. A disordered region spans residues 553-578 (TTGGNTFGGLNETENTSPNPARSSMD). Polar residues predominate over residues 564 to 574 (ETENTSPNPAR). S569 is modified (phosphoserine).

This sequence belongs to the monovalent cation:proton antiporter 1 (CPA1) transporter (TC 2.A.36) family. As to quaternary structure, interacts with CYP6.

Its subcellular location is the endosome membrane. The protein resides in the prevacuolar compartment membrane. Endosomal/prevacuolar electroneutral Na(+)/H(+) exchanger which mediates intracellular sequestration of Na(+) cations, regulates vacuolar pH and contributes to osmotolerance following sudden exposure to hyperosmotic media. Also contributes to the postdiauxic/stationary phase resistance to osmotic stress and allows for the continued growth of cells until the acquired osmotolerance response can occur. Involved in hygromycin resistance probably through its influence on the electrochemical proton gradient affecting secondarily the entrance of hygromycin. Mediates pH-dependent vesicle trafficking out of the endosome. Contributes to K(+) sequestration and homeostasis. This Saccharomyces cerevisiae (strain ATCC 204508 / S288c) (Baker's yeast) protein is Endosomal/prevacuolar sodium/hydrogen exchanger (NHX1).